Consider the following 544-residue polypeptide: Chaperonin GroEL 2 (544 aa).

ATP-binding positions include 29–32 (TLGP), 86–90 (DGTTT), glycine 413, 479–481 (NAA), and aspartate 495.

The protein belongs to the chaperonin (HSP60) family. Forms a cylinder of 14 subunits composed of two heptameric rings stacked back-to-back. Interacts with the co-chaperonin GroES.

The protein resides in the cytoplasm. The catalysed reaction is ATP + H2O + a folded polypeptide = ADP + phosphate + an unfolded polypeptide.. In terms of biological role, together with its co-chaperonin GroES, plays an essential role in assisting protein folding. The GroEL-GroES system forms a nano-cage that allows encapsulation of the non-native substrate proteins and provides a physical environment optimized to promote and accelerate protein folding. The protein is Chaperonin GroEL 2 of Trichodesmium erythraeum (strain IMS101).